The chain runs to 565 residues: Beta-hexosaminidase subunit beta (565 aa).

A signal peptide spans M1 to A13. N71 carries N-linked (GlcNAc...) asparagine glycosylation. E347 (proton donor) is an active-site residue.

Belongs to the glycosyl hydrolase 20 family. As to quaternary structure, heterodimer of one alpha subunit and one beta subunit. In terms of processing, glycosylated.

The protein localises to the cytoplasmic granule. The protein resides in the secreted. It catalyses the reaction Hydrolysis of terminal non-reducing N-acetyl-D-hexosamine residues in N-acetyl-beta-D-hexosaminides.. Functionally, hydrolyzes the non-reducing end N-acetyl-D-hexosamine and/or sulfated N-acetyl-D-hexosamine of glycoconjugates. May contribute to amoebic pathogenicity and may be involved in the destruction of extracellular matrix components. The chain is Beta-hexosaminidase subunit beta from Entamoeba histolytica (strain ATCC 30459 / HM-1:IMSS / ABRM).